The chain runs to 407 residues: MLRYPYFCRIHKNFLSCWLESGIYNLGVWPKKIHATAERYNEYEAQEETDQTGIQELHRSQDRDSGVMTKLHIPVMVDEVVRCLAPQKGQVFLDMTFGSGGHTRAILQKEPDITLYALDRDPTAYAIAEQLSELYPKQIRAILGQFSQAEALLMKAGVQPGTLDGVLLDLGCSSMQLDTPERGFSLRKDGPLDMRMDGDRYPDMPTAADVVNALDQQALASILRAYGEEKHAKKIASAIIQARGLYPITRTQQLASIVAGAFPPSALYARKDLLQRPTHIATKTFQAFRIFVNNELNELYTGLKTAQKFLRPGGHLVALSFHSLEDRIIKRFLLGISMTERFNLSARQKVIQKSQLDSDQENKEGVSTGKAPLMWKLIHKKVLTPEDEDVQDNPRGRSAKLRAAIKL.

Positions 44–63 (EAQEETDQTGIQELHRSQDR) are disordered. S-adenosyl-L-methionine is bound by residues 100–102 (GGH), Asp119, Phe146, Asp169, and Gln176. Ser358 is modified (phosphoserine). The interval 386-407 (EDEDVQDNPRGRSAKLRAAIKL) is disordered. Residues 397 to 407 (RSAKLRAAIKL) show a composition bias toward basic residues.

It belongs to the methyltransferase superfamily. RsmH family.

The protein resides in the mitochondrion matrix. The catalysed reaction is cytidine(839) in 12S rRNA + S-adenosyl-L-methionine = N(4)-methylcytidine(839) in 12S rRNA + S-adenosyl-L-homocysteine + H(+). In terms of biological role, N4-methylcytidine (m4C) methyltransferase responsible for the methylation of position C839 in mitochondrial 12S rRNA. Involved in the stabilization of 12S rRNA folding, therefore facilitating the assembly of the mitochondrial small ribosomal subunits. The chain is 12S rRNA N(4)-cytidine methyltransferase METTL15 (METTL15) from Bos taurus (Bovine).